A 294-amino-acid polypeptide reads, in one-letter code: Large ribosomal subunit protein uL2 (294 aa).

2 disordered regions span residues 1 to 37 (MGIR…RPEK) and 228 to 294 (GSVM…RAAQ). Residues 23–37 (ELSRDENGKRPRPEK) show a composition bias toward basic and acidic residues. The span at 264-285 (KTRKRNKPSNKFIVRGRRRGGR) shows a compositional bias: basic residues.

It belongs to the universal ribosomal protein uL2 family. As to quaternary structure, part of the 50S ribosomal subunit. Forms a bridge to the 30S subunit in the 70S ribosome.

In terms of biological role, one of the primary rRNA binding proteins. Required for association of the 30S and 50S subunits to form the 70S ribosome, for tRNA binding and peptide bond formation. It has been suggested to have peptidyltransferase activity; this is somewhat controversial. Makes several contacts with the 16S rRNA in the 70S ribosome. This is Large ribosomal subunit protein uL2 from Synechococcus sp. (strain JA-2-3B'a(2-13)) (Cyanobacteria bacterium Yellowstone B-Prime).